The sequence spans 150 residues: 1,4-dihydroxy-2-naphthoyl-CoA hydrolase (150 aa).

Residue Asp19 is part of the active site.

This sequence belongs to the 4-hydroxybenzoyl-CoA thioesterase family. DHNA-CoA hydrolase subfamily.

The enzyme catalyses 1,4-dihydroxy-2-naphthoyl-CoA + H2O = 1,4-dihydroxy-2-naphthoate + CoA + H(+). The protein operates within cofactor biosynthesis; phylloquinone biosynthesis. Its pathway is quinol/quinone metabolism; 1,4-dihydroxy-2-naphthoate biosynthesis; 1,4-dihydroxy-2-naphthoate from chorismate: step 7/7. Catalyzes the hydrolysis of 1,4-dihydroxy-2-naphthoyl-CoA (DHNA-CoA) to 1,4-dihydroxy-2-naphthoate (DHNA), a reaction involved in phylloquinone (vitamin K1) biosynthesis. The protein is 1,4-dihydroxy-2-naphthoyl-CoA hydrolase of Prochlorococcus marinus (strain MIT 9215).